The chain runs to 487 residues: MALRLYNTLSGEKEPFVPRVAGKVGMYVCGVTVYDFCHIGHARAGIVFDMIYRYLRFSGYDVTYIRNYTDIDDKIINRANQEGTDYRTIADRYIATFDEDMDRLGMLRPTIEPKATDHIEDIISIIQRLIDNGHAYAVDGDVYFAVETFPAYLKLSGRNLDDMLAGARVDVDERKRNPMDFALWKGSKPGEPWWESPWGKGRPGWHIECSAMSMRFLGPSFDIHGGGKDLVFPHHENEIAQSEGANGCQFVKYWLHNGFVNINSEKMSKSLGNFFTIREVLELFDPETLRFFILQAHYRSPLDYSDQNLREAQAGLSRIYEALAALDQALEKPATAIHLPASAAEFAEKVAGLLPRFREAMDDDFNTAQALGTLFDSIRTLNRLLAEGGGSSSASRADLEQLRAAVTEIGAVLGLFRIKPSDWLAAREAEKARHLEISPEEIEGLIVERAAARKNKDFKRSDEIRDYLLSRDIQLVDTPQGTAWKVK.

C29 contributes to the Zn(2+) binding site. The short motif at 31 to 41 (VTVYDFCHIGH) is the 'HIGH' region element. C209, H234, and E238 together coordinate Zn(2+). A 'KMSKS' region motif is present at residues 266–270 (KMSKS). K269 is an ATP binding site.

It belongs to the class-I aminoacyl-tRNA synthetase family. In terms of assembly, monomer. Zn(2+) serves as cofactor.

The protein resides in the cytoplasm. The catalysed reaction is tRNA(Cys) + L-cysteine + ATP = L-cysteinyl-tRNA(Cys) + AMP + diphosphate. The chain is Cysteine--tRNA ligase from Trichlorobacter lovleyi (strain ATCC BAA-1151 / DSM 17278 / SZ) (Geobacter lovleyi).